We begin with the raw amino-acid sequence, 157 residues long: Endoribonuclease YbeY (157 aa).

The Zn(2+) site is built by H116, H120, and H126.

The protein belongs to the endoribonuclease YbeY family. Requires Zn(2+) as cofactor.

It localises to the cytoplasm. Single strand-specific metallo-endoribonuclease involved in late-stage 70S ribosome quality control and in maturation of the 3' terminus of the 16S rRNA. In Renibacterium salmoninarum (strain ATCC 33209 / DSM 20767 / JCM 11484 / NBRC 15589 / NCIMB 2235), this protein is Endoribonuclease YbeY.